A 435-amino-acid polypeptide reads, in one-letter code: Methylenetetrahydrofolate--tRNA-(uracil-5-)-methyltransferase TrmFO (435 aa).

An FAD-binding site is contributed by 9-14 (GAGLAG).

This sequence belongs to the MnmG family. TrmFO subfamily. FAD is required as a cofactor.

Its subcellular location is the cytoplasm. It carries out the reaction uridine(54) in tRNA + (6R)-5,10-methylene-5,6,7,8-tetrahydrofolate + NADH + H(+) = 5-methyluridine(54) in tRNA + (6S)-5,6,7,8-tetrahydrofolate + NAD(+). The enzyme catalyses uridine(54) in tRNA + (6R)-5,10-methylene-5,6,7,8-tetrahydrofolate + NADPH + H(+) = 5-methyluridine(54) in tRNA + (6S)-5,6,7,8-tetrahydrofolate + NADP(+). Catalyzes the folate-dependent formation of 5-methyl-uridine at position 54 (M-5-U54) in all tRNAs. This chain is Methylenetetrahydrofolate--tRNA-(uracil-5-)-methyltransferase TrmFO, found in Staphylococcus aureus (strain Newman).